Reading from the N-terminus, the 92-residue chain is Large ribosomal subunit protein eL43 (92 aa).

The C4-type zinc-finger motif lies at 39-60; that stretch reads CDFCGKYGMKRKAVGIWSCKGC.

This sequence belongs to the eukaryotic ribosomal protein eL43 family.

This Ostreococcus lucimarinus (strain CCE9901) protein is Large ribosomal subunit protein eL43 (RPL37a).